A 118-amino-acid chain; its full sequence is Protein Rev (118 aa).

Phosphoserine; by host CK2 occurs at positions 5 and 8. The tract at residues 18–26 (LIKFLYQSN) is homomultimerization. The tract at residues 23 to 46 (YQSNPPPSPEGTRQARRNRRRRWR) is disordered. The short motif at 34–50 (TRQARRNRRRRWRARQR) is the Nuclear localization signal and RNA-binding (RRE) element. Residues 36 to 46 (QARRNRRRRWR) are compositionally biased toward basic residues. The Nuclear export signal and binding to XPO1 signature appears at 73–84 (LQLPPLERLNLN). Residues 87-118 (EDCRTSGTQGVGHPQISVESPTVLESGTEEQC) form a disordered region. Ser-92 carries the phosphoserine; by host modification. Polar residues predominate over residues 103-112 (SVESPTVLES).

Belongs to the HIV-1 REV protein family. As to quaternary structure, homomultimer; when bound to the RRE. Multimeric assembly is essential for activity and may involve XPO1. Binds to human KPNB1, XPO1, TNPO1, RANBP5 and IPO7. Interacts with the viral Integrase. Interacts with human KHDRBS1. Interacts with human NAP1; this interaction decreases Rev multimerization and stimulates its activity. Interacts with human DEAD-box helicases DDX3 and DDX24; these interactions may serve for viral RNA export to the cytoplasm and packaging, respectively. Interacts with human PSIP1; this interaction may inhibit HIV-1 DNA integration by promoting dissociation of the Integrase-LEDGF/p75 complex. Post-translationally, asymmetrically arginine dimethylated at one site by host PRMT6. Methylation impairs the RNA-binding activity and export of viral RNA from the nucleus to the cytoplasm. Phosphorylated by protein kinase CK2. Presence of, and maybe binding to the N-terminus of the regulatory beta subunit of CK2 is necessary for CK2-mediated Rev's phosphorylation.

The protein localises to the host nucleus. The protein resides in the host nucleolus. Its subcellular location is the host cytoplasm. Functionally, escorts unspliced or incompletely spliced viral pre-mRNAs (late transcripts) out of the nucleus of infected cells. These pre-mRNAs carry a recognition sequence called Rev responsive element (RRE) located in the env gene, that is not present in fully spliced viral mRNAs (early transcripts). This function is essential since most viral proteins are translated from unspliced or partially spliced pre-mRNAs which cannot exit the nucleus by the pathway used by fully processed cellular mRNAs. Rev itself is translated from a fully spliced mRNA that readily exits the nucleus. Rev's nuclear localization signal (NLS) binds directly to KPNB1/Importin beta-1 without previous binding to KPNA1/Importin alpha-1. KPNB1 binds to the GDP bound form of RAN (Ran-GDP) and targets Rev to the nucleus. In the nucleus, the conversion from Ran-GDP to Ran-GTP dissociates Rev from KPNB1 and allows Rev's binding to the RRE in viral pre-mRNAs. Rev multimerization on the RRE via cooperative assembly exposes its nuclear export signal (NES) to the surface. Rev can then form a complex with XPO1/CRM1 and Ran-GTP, leading to nuclear export of the complex. Conversion from Ran-GTP to Ran-GDP mediates dissociation of the Rev/RRE/XPO1/RAN complex, so that Rev can return to the nucleus for a subsequent round of export. Beside KPNB1, also seems to interact with TNPO1/Transportin-1, RANBP5/IPO5 and IPO7/RANBP7 for nuclear import. The nucleoporin-like HRB/RIP is an essential cofactor that probably indirectly interacts with Rev to release HIV RNAs from the perinuclear region to the cytoplasm. The polypeptide is Protein Rev (Human immunodeficiency virus type 1 group M subtype D (isolate ELI) (HIV-1)).